We begin with the raw amino-acid sequence, 163 residues long: Carbon monoxide dehydrogenase small chain (163 aa).

The 2Fe-2S ferredoxin-type domain maps to 4–80 (KIITVNVNGK…GSEVLTVEGL (77 aa)). Cysteine 42, cysteine 47, cysteine 50, cysteine 62, cysteine 101, cysteine 104, cysteine 136, and cysteine 138 together coordinate [2Fe-2S] cluster.

As to quaternary structure, dimer of heterotrimers. Each heterotrimer consists of a large, a medium and a small subunit. Requires [2Fe-2S] cluster as cofactor.

The enzyme catalyses CO + a quinone + H2O = a quinol + CO2. Functionally, catalyzes the oxidation of carbon monoxide to carbon dioxide. The protein is Carbon monoxide dehydrogenase small chain (cutS) of Hydrogenophaga pseudoflava (Pseudomonas carboxydoflava).